The sequence spans 98 residues: Large ribosomal subunit protein uL23 (98 aa).

This sequence belongs to the universal ribosomal protein uL23 family. As to quaternary structure, part of the 50S ribosomal subunit. Contacts protein L29, and trigger factor when it is bound to the ribosome.

One of the early assembly proteins it binds 23S rRNA. One of the proteins that surrounds the polypeptide exit tunnel on the outside of the ribosome. Forms the main docking site for trigger factor binding to the ribosome. The protein is Large ribosomal subunit protein uL23 of Caulobacter sp. (strain K31).